The chain runs to 563 residues: CTP synthase (563 aa).

Residues 1–278 (MAKATAKNSA…DLRVLEQLHL (278 aa)) are amidoligase domain. CTP is bound at residue serine 24. Serine 24 contributes to the UTP binding site. Residue 25–30 (SLGKGI) participates in ATP binding. An L-glutamine-binding site is contributed by tyrosine 65. Aspartate 82 contributes to the ATP binding site. Mg(2+)-binding residues include aspartate 82 and glutamate 151. Residues 158-160 (DIE), 198-203 (KTKPSQ), and lysine 234 contribute to the CTP site. UTP contacts are provided by residues 198-203 (KTKPSQ) and lysine 234. 250 to 252 (KDV) contacts ATP. Residues 303–545 (TIALVGKYIA…VKAALEQKKA (243 aa)) form the Glutamine amidotransferase type-1 domain. Glycine 363 is an L-glutamine binding site. The active-site Nucleophile; for glutamine hydrolysis is the cysteine 390. L-glutamine is bound by residues 391-394 (LGMQ), glutamate 414, and arginine 471. Residues histidine 518 and glutamate 520 contribute to the active site. Positions 542–563 (QKKANGKKPTAPSEKTKKTKTK) are disordered.

Belongs to the CTP synthase family. Homotetramer.

It catalyses the reaction UTP + L-glutamine + ATP + H2O = CTP + L-glutamate + ADP + phosphate + 2 H(+). The enzyme catalyses L-glutamine + H2O = L-glutamate + NH4(+). It carries out the reaction UTP + NH4(+) + ATP = CTP + ADP + phosphate + 2 H(+). The protein operates within pyrimidine metabolism; CTP biosynthesis via de novo pathway; CTP from UDP: step 2/2. Allosterically activated by GTP, when glutamine is the substrate; GTP has no effect on the reaction when ammonia is the substrate. The allosteric effector GTP functions by stabilizing the protein conformation that binds the tetrahedral intermediate(s) formed during glutamine hydrolysis. Inhibited by the product CTP, via allosteric rather than competitive inhibition. Functionally, catalyzes the ATP-dependent amination of UTP to CTP with either L-glutamine or ammonia as the source of nitrogen. Regulates intracellular CTP levels through interactions with the four ribonucleotide triphosphates. The protein is CTP synthase of Fibrobacter succinogenes (strain ATCC 19169 / S85).